A 207-amino-acid polypeptide reads, in one-letter code: MSYSTFKRSLEIEVISAEGLKVDRKPLKKKTYSVVRIDEKSWASKVDELGGSYPIWKDRFDMEMPINASVRFISIEVYYRTSGSGRDKNVGYAKIPVTDFMGGFAPQGHLNFLSYRLRDEYGDKCGIVNVSIMVKPDGNDHKSSLPSSSFAVAPVDYAACSWQATAAARNNQMWRPRTSSSMVSTAGYGGGRVVTGVPVWCAYQRPS.

The 112-residue stretch at 1–112 (MSYSTFKRSL…GFAPQGHLNF (112 aa)) folds into the C2 domain.

As to quaternary structure, interacts with BON1, BON2 and BON3. In terms of tissue distribution, expressed in roots, leaves, stems and flowers.

It is found in the membrane. Its function is as follows. Negative regulator of cell death and defense responses. Exhibits calcium-dependent phospholipid binding properties. In Arabidopsis thaliana (Mouse-ear cress), this protein is BON1-associated protein 2 (BAP2).